The sequence spans 190 residues: Segregation and condensation protein B (190 aa).

The protein belongs to the ScpB family. As to quaternary structure, homodimer. Homodimerization may be required to stabilize the binding of ScpA to the Smc head domains. Component of a cohesin-like complex composed of ScpA, ScpB and the Smc homodimer, in which ScpA and ScpB bind to the head domain of Smc. The presence of the three proteins is required for the association of the complex with DNA.

The protein resides in the cytoplasm. Participates in chromosomal partition during cell division. May act via the formation of a condensin-like complex containing Smc and ScpA that pull DNA away from mid-cell into both cell halves. This is Segregation and condensation protein B from Bacillus cereus (strain AH187).